A 98-amino-acid chain; its full sequence is Large ribosomal subunit protein eL30 (98 aa).

It belongs to the eukaryotic ribosomal protein eL30 family.

This chain is Large ribosomal subunit protein eL30 (rpl30e), found in Methanothermobacter thermautotrophicus (strain ATCC 29096 / DSM 1053 / JCM 10044 / NBRC 100330 / Delta H) (Methanobacterium thermoautotrophicum).